The following is a 332-amino-acid chain: Invasin IpaD (332 aa).

Residues 1-25 (MNITTLTNSISTSSFSPNNTNGSST) are compositionally biased toward low complexity. A disordered region spans residues 1–43 (MNITTLTNSISTSSFSPNNTNGSSTETVNSDIKTTTSSHPVSS). The span at 26–43 (ETVNSDIKTTTSSHPVSS) shows a compositional bias: polar residues. Positions 44–77 (LTMLNDTLHNIRTTNQALKKELSQKTLTKTSLEE) form a coiled coil. The tract at residues 192-267 (VNSLKKALEE…KSLDNLGGNG (76 aa)) is ipaB binding.

This sequence belongs to the invasin protein D family.

The protein resides in the secreted. Its function is as follows. Required for bacterial invasion of host cells. Controls IpaB and IpaC secretion, and the efficiency with which they are physically inserted into target cell membranes. These proteins are exported via T3SS to form a pore in the host membrane that allows the translocation of the other effectors into the host cytoplasm. Along with IpaB, is essential for both blocking secretion through the Mxi/Spa translocon in the absence of a secretion-inducing signal, and for controlling the level of secretion in the presence of this signal. In Shigella flexneri, this protein is Invasin IpaD (ipaD).